The following is a 360-amino-acid chain: MTAKTPLHTTHLACGAKMVDFHGWDMPLHYGSQLNEHHAVRNDAGMFDVSHMTIVDILGAGGRQFLRKLLTNDVDQITHNGKALYSCMCNEHGGIIDDLIVYQRASDNYRVVLNSATRQNDVAWIRAKSEGFAVGLQERRELSMLAVQGPNAIAKTLSILAPAHVDAVSTLTPFECVDVDHWFFARTGYTGEDGLEIIVPNEFITQLWNDLLNAGVTPCGLGARDTLRLEAGMLLYGQDMDETTTPLESGLAWTVKWEPEDRGFIGMGALVSQKQQGIKRKMVGLTLLDKGIMRHGQKVIIEGCPDGIITSGSYSPTLQQSIALARVPVETGEQVLVDIRGKLIPAKVGKPRFIKQGKPV.

Belongs to the GcvT family. In terms of assembly, the glycine cleavage system is composed of four proteins: P, T, L and H.

It carries out the reaction N(6)-[(R)-S(8)-aminomethyldihydrolipoyl]-L-lysyl-[protein] + (6S)-5,6,7,8-tetrahydrofolate = N(6)-[(R)-dihydrolipoyl]-L-lysyl-[protein] + (6R)-5,10-methylene-5,6,7,8-tetrahydrofolate + NH4(+). Functionally, the glycine cleavage system catalyzes the degradation of glycine. The sequence is that of Aminomethyltransferase from Legionella pneumophila (strain Corby).